A 311-amino-acid chain; its full sequence is Putative dihydroorotate dehydrogenase A (fumarate) (311 aa).

Substrate-binding positions include Lys-45, 69-73, and Asn-128; that span reads NSMGL. 45–46 serves as a coordination point for FMN; the sequence is KT. Residue Asn-128 participates in FMN binding. The active-site Nucleophile is the Cys-131. FMN is bound by residues Lys-165 and Val-193. Residue 194–195 coordinates substrate; that stretch reads NS. FMN contacts are provided by residues Gly-220, 248 to 249, and 270 to 271; these read GG and GT.

This sequence belongs to the dihydroorotate dehydrogenase family. Type 1 subfamily. As to quaternary structure, homodimer. It depends on FMN as a cofactor.

It localises to the cytoplasm. It catalyses the reaction (S)-dihydroorotate + fumarate = orotate + succinate. Its pathway is pyrimidine metabolism; UMP biosynthesis via de novo pathway. Its function is as follows. Catalyzes the conversion of dihydroorotate to orotate with fumarate as the electron acceptor. The sequence is that of Putative dihydroorotate dehydrogenase A (fumarate) (pyrD) from Streptococcus pyogenes serotype M3 (strain SSI-1).